The chain runs to 321 residues: Chitinase-like protein 1 (321 aa).

The first 26 residues, 1 to 26, serve as a signal peptide directing secretion; the sequence is MVTIRSGSIVILVLLAVSFLALVANG. Cysteine 42 and cysteine 55 are joined by a disulfide. Asparagine 57 carries an N-linked (GlcNAc...) asparagine glycan. The cysteines at positions 157 and 167 are disulfide-linked. 2 N-linked (GlcNAc...) asparagine glycosylation sites follow: asparagine 208 and asparagine 244. Cysteines 267 and 304 form a disulfide. The segment at 297–321 is disordered; sequence GPNDELSCAEQKPFNPSTVPSSSSS. Polar residues predominate over residues 310-321; that stretch reads FNPSTVPSSSSS.

This sequence belongs to the glycosyl hydrolase 19 family. Mostly expressed in seedlings shoots and roots, stems, and flowers, and, to a lower extent, in flowers, mature leaves and roots.

It localises to the secreted. Its function is as follows. No chitinase activity. Essential for normal plant growth and development. Regulates cell expansion extent and differentiation at least in roots and hypocotyls. Prevents lignin accumulation in the pith. May modulate ethylene-mediated regulation during development. Probably required to establish thermotolerance acclimation. Plays a role for controlled anisotropic cell expansion in the regulation of waving during root gravitropism and thigmotropism. Involved in the root system architecture adaptation to multiple environmental conditions such as nitrate. Contributes to salt tolerance and possibly to drought by preventing the overaccumulation of sodium ions. The sequence is that of Chitinase-like protein 1 (CTL1) from Arabidopsis thaliana (Mouse-ear cress).